The chain runs to 117 residues: Probable non-functional immunoglobulin heavy variable 7-81 (117 aa).

The N-terminal stretch at 1-19 is a signal peptide; the sequence is MDWTWSILFLVAAATGTYS. The interval 20 to 44 is framework-1; the sequence is QVQLVQSGHEVKQPGASVKVSCKAS. Positions 20–117 constitute an Ig-like domain; sequence QVQLVQSGHE…EDMAMYYCAR (98 aa). Cysteine 41 and cysteine 115 are oxidised to a cystine. Residues 45-52 are complementarity-determining-1; the sequence is GYSFTTYG. The segment at 53–69 is framework-2; the sequence is MNWVPQAPGQGLEWMGW. A complementarity-determining-2 region spans residues 70-77; the sequence is FNTYTGNP. Residue asparagine 76 is glycosylated (N-linked (GlcNAc...) asparagine). The segment at 78-115 is framework-3; that stretch reads TYAQGFTGRFVFSMDTSASTAYLQISSLKAEDMAMYYC. The tract at residues 116–117 is complementarity-determining-3; it reads AR.

Immunoglobulins are composed of two identical heavy chains and two identical light chains; disulfide-linked.

It is found in the secreted. The protein localises to the cell membrane. Functionally, probable non-functional open reading frame (ORF) of V region of the variable domain of immunoglobulin heavy chains. Non-functional ORF generally cannot participate in the synthesis of a productive immunoglobulin chain due to altered V-(D)-J or switch recombination and/or splicing site (at mRNA level) and/or conserved amino acid change (protein level). Immunoglobulins, also known as antibodies, are membrane-bound or secreted glycoproteins produced by B lymphocytes. In the recognition phase of humoral immunity, the membrane-bound immunoglobulins serve as receptors which, upon binding of a specific antigen, trigger the clonal expansion and differentiation of B lymphocytes into immunoglobulins-secreting plasma cells. Secreted immunoglobulins mediate the effector phase of humoral immunity, which results in the elimination of bound antigens. The antigen binding site is formed by the variable domain of one heavy chain, together with that of its associated light chain. Thus, each immunoglobulin has two antigen binding sites with remarkable affinity for a particular antigen. The variable domains are assembled by a process called V-(D)-J rearrangement and can then be subjected to somatic hypermutations which, after exposure to antigen and selection, allow affinity maturation for a particular antigen. The protein is Probable non-functional immunoglobulin heavy variable 7-81 of Homo sapiens (Human).